A 192-amino-acid polypeptide reads, in one-letter code: Adenylate kinase (192 aa).

10–18 (GVPGVGGTT) is a binding site for ATP.

Belongs to the archaeal adenylate kinase family. In terms of assembly, monomer.

The protein resides in the cytoplasm. The enzyme catalyses AMP + ATP = 2 ADP. The chain is Adenylate kinase (adkA) from Methanotorris igneus (Methanococcus igneus).